The sequence spans 213 residues: MPGEATETVPAIEQQLLQPQAETGSGTESDSDESVPELEEQDSTQVTAQVQLVVAAEIDEEPVSKAKQRRSEKKARKARFKLGLQQVTGVTRVTIRKSKNILFVITKPDVYKSPASDTYMVFGEAKIEDLSQEAQLAAAEKFKVQGEAVSNIQENTQTPTVQEGSEDEEVDETGVEIKDIELVLSQANVWGAKAVRALKNSNDIVNAIMELTM.

A disordered region spans residues 1–46; that stretch reads MPGEATETVPAIEQQLLQPQAETGSGTESDSDESVPELEEQDSTQV. Residues 15–28 show a composition bias toward polar residues; sequence QLLQPQAETGSGTE. Residues 29 to 42 are compositionally biased toward acidic residues; the sequence is SDSDESVPELEEQD. 2 positions are modified to phosphoserine: S43 and S131. In terms of domain architecture, NAC-A/B spans 69–134; sequence RRSEKKARKA…AKIEDLSQEA (66 aa). K141 carries the post-translational modification N6-acetyllysine; alternate. Residue K141 forms a Glycyl lysine isopeptide (Lys-Gly) (interchain with G-Cter in SUMO2); alternate linkage. T160 bears the Phosphothreonine mark. Residues S165, S185, and S201 each carry the phosphoserine modification. One can recognise a UBA domain in the interval 175–211; that stretch reads VEIKDIELVLSQANVWGAKAVRALKNSNDIVNAIMEL. The residue at position 212 (T212) is a Phosphothreonine.

This sequence belongs to the NAC-alpha family.

The polypeptide is Putative nascent polypeptide-associated complex subunit alpha-like protein (Homo sapiens (Human)).